Consider the following 579-residue polypeptide: YTH domain-containing family protein 2 (579 aa).

The disordered stretch occupies residues 1-45 (MSASSLLEQRPKGQGNKVQNGSVHQKDGLNDDDFEPYLSPQARPN). Ser-2 bears the N-acetylserine mark. 6 positions are modified to phosphoserine: Ser-2, Ser-4, Ser-5, Ser-22, Ser-39, and Ser-196. Residues 2–384 (SASSLLEQRP…QAGSGSTPSE (383 aa)) form a localization to mRNA processing bodies (P-bodies) region. The interval 247–387 (AKQQPKLKTK…SGSTPSEPHP (141 aa)) is disordered. Polar residues predominate over residues 291 to 316 (ALVQNIGQPTQGSPQHVGQQANNSPP). Over residues 337-349 (AQLSVQQQAAQPT) the composition is skewed to low complexity. Ser-359 bears the Phosphoserine mark. Residues 359–371 (SGFGHNGVDGNGV) show a composition bias toward gly residues. The span at 372–383 (GQSQAGSGSTPS) shows a compositional bias: polar residues. Residues 385–579 (PHPVLEKLRS…VKKERQGRGK (195 aa)) are interaction with m6A-containing mRNAs. Position 394 is a phosphoserine (Ser-394). The region spanning 410–544 (GRVFIIKSYS…EKAKQVLKII (135 aa)) is the YTH domain. Residues 416 to 418 (KSY), Asp-422, 432 to 433 (WC), Asn-462, Trp-486, and Trp-491 contribute to the RNA site.

It belongs to the YTHDF family. YTHDF2 subfamily. Interacts with CNOT1; interaction is direct and promotes recruitment of the CCR4-NOT complex. Interacts with YTHDF3. Interacts with RIDA/HRSP12; interaction leads to recruitment of the ribonuclease P/MRP complex. Post-translationally, ubiquitinated by the SCF(SKP2) complex, leading to its degradation.

It is found in the cytoplasm. The protein resides in the cytosol. It localises to the P-body. The protein localises to the stress granule. Its subcellular location is the nucleus. Its function is as follows. Specifically recognizes and binds N6-methyladenosine (m6A)-containing RNAs, and regulates their stability. M6A is a modification present at internal sites of mRNAs and some non-coding RNAs and plays a role in mRNA stability and processing. Acts as a regulator of mRNA stability by promoting degradation of m6A-containing mRNAs via interaction with the CCR4-NOT and ribonuclease P/MRP complexes, depending on the context. The YTHDF paralogs (YTHDF1, YTHDF2 and YTHDF3) share m6A-containing mRNAs targets and act redundantly to mediate mRNA degradation and cellular differentiation. M6A-containing mRNAs containing a binding site for RIDA/HRSP12 (5'-GGUUC-3') are preferentially degraded by endoribonucleolytic cleavage: cooperative binding of RIDA/HRSP12 and YTHDF2 to transcripts leads to recruitment of the ribonuclease P/MRP complex. Other m6A-containing mRNAs undergo deadenylation via direct interaction between YTHDF2 and CNOT1, leading to recruitment of the CCR4-NOT and subsequent deadenylation of m6A-containing mRNAs. Required maternally to regulate oocyte maturation: probably acts by binding to m6A-containing mRNAs, thereby regulating maternal transcript dosage during oocyte maturation, which is essential for the competence of oocytes to sustain early zygotic development. Also required during spermatogenesis: regulates spermagonial adhesion by promoting degradation of m6A-containing transcripts coding for matrix metallopeptidases. Also involved in hematopoietic stem cells specification by binding to m6A-containing mRNAs, leading to promote their degradation. Also acts as a regulator of neural development by promoting m6A-dependent degradation of neural development-related mRNA targets. Inhibits neural specification of induced pluripotent stem cells by binding to methylated neural-specific mRNAs and promoting their degradation, thereby restraining neural differentiation. Regulates circadian regulation of hepatic lipid metabolism: acts by promoting m6A-dependent degradation of PPARA transcripts. Regulates the innate immune response to infection by inhibiting the type I interferon response: acts by binding to m6A-containing IFNB transcripts and promoting their degradation. May also act as a promoter of cap-independent mRNA translation following heat shock stress: upon stress, relocalizes to the nucleus and specifically binds mRNAs with some m6A methylation mark at their 5'-UTR, protecting demethylation of mRNAs by FTO, thereby promoting cap-independent mRNA translation. Regulates mitotic entry by promoting the phase-specific m6A-dependent degradation of WEE1 transcripts. Promotes formation of phase-separated membraneless compartments, such as P-bodies or stress granules, by undergoing liquid-liquid phase separation upon binding to mRNAs containing multiple m6A-modified residues: polymethylated mRNAs act as a multivalent scaffold for the binding of YTHDF proteins, juxtaposing their disordered regions and thereby leading to phase separation. The resulting mRNA-YTHDF complexes then partition into different endogenous phase-separated membraneless compartments, such as P-bodies, stress granules or neuronal RNA granules. May also recognize and bind RNAs modified by C5-methylcytosine (m5C) and act as a regulator of rRNA processing. This chain is YTH domain-containing family protein 2, found in Macaca fascicularis (Crab-eating macaque).